The sequence spans 166 residues: Crossover junction endodeoxyribonuclease RuvC (166 aa).

Catalysis depends on residues aspartate 12, glutamate 71, and aspartate 143. Mg(2+) contacts are provided by aspartate 12, glutamate 71, and aspartate 143.

This sequence belongs to the RuvC family. In terms of assembly, homodimer which binds Holliday junction (HJ) DNA. The HJ becomes 2-fold symmetrical on binding to RuvC with unstacked arms; it has a different conformation from HJ DNA in complex with RuvA. In the full resolvosome a probable DNA-RuvA(4)-RuvB(12)-RuvC(2) complex forms which resolves the HJ. Requires Mg(2+) as cofactor.

It is found in the cytoplasm. It catalyses the reaction Endonucleolytic cleavage at a junction such as a reciprocal single-stranded crossover between two homologous DNA duplexes (Holliday junction).. Its function is as follows. The RuvA-RuvB-RuvC complex processes Holliday junction (HJ) DNA during genetic recombination and DNA repair. Endonuclease that resolves HJ intermediates. Cleaves cruciform DNA by making single-stranded nicks across the HJ at symmetrical positions within the homologous arms, yielding a 5'-phosphate and a 3'-hydroxyl group; requires a central core of homology in the junction. The consensus cleavage sequence is 5'-(A/T)TT(C/G)-3'. Cleavage occurs on the 3'-side of the TT dinucleotide at the point of strand exchange. HJ branch migration catalyzed by RuvA-RuvB allows RuvC to scan DNA until it finds its consensus sequence, where it cleaves and resolves the cruciform DNA. The chain is Crossover junction endodeoxyribonuclease RuvC from Oleidesulfovibrio alaskensis (strain ATCC BAA-1058 / DSM 17464 / G20) (Desulfovibrio alaskensis).